We begin with the raw amino-acid sequence, 77 residues long: Small ribosomal subunit protein bS20 (77 aa).

Residues 47–77 form a disordered region; it reads ASSSIDKAESKGLIHKNKASRDKARLAAKLG.

The protein belongs to the bacterial ribosomal protein bS20 family.

Binds directly to 16S ribosomal RNA. The polypeptide is Small ribosomal subunit protein bS20 (Streptococcus pyogenes serotype M1).